A 173-amino-acid chain; its full sequence is NADH-ubiquinone oxidoreductase chain 6 (173 aa).

The next 5 membrane-spanning stretches (helical) occupy residues 1–21 (MVYFMFIMLVGLILGLMAVAS), 25–45 (PYFAALGLVVAAGVGCGLLVG), 53–73 (LVLFLIYLGGMLVVFAYTAAL), 82–102 (WGDWSVLLYVSVYLLGIFFVG), and 141–161 (GIMLVLGGWVLLLTLFVILEL).

The protein belongs to the complex I subunit 6 family.

The protein resides in the mitochondrion membrane. The enzyme catalyses a ubiquinone + NADH + 5 H(+)(in) = a ubiquinol + NAD(+) + 4 H(+)(out). In terms of biological role, core subunit of the mitochondrial membrane respiratory chain NADH dehydrogenase (Complex I) that is believed to belong to the minimal assembly required for catalysis. Complex I functions in the transfer of electrons from NADH to the respiratory chain. The immediate electron acceptor for the enzyme is believed to be ubiquinone. In Squalus acanthias (Spiny dogfish), this protein is NADH-ubiquinone oxidoreductase chain 6 (MT-ND6).